We begin with the raw amino-acid sequence, 104 residues long: Protein translation factor SUI1 homolog (104 aa).

Belongs to the SUI1 family.

This Ignicoccus hospitalis (strain KIN4/I / DSM 18386 / JCM 14125) protein is Protein translation factor SUI1 homolog.